The sequence spans 171 residues: MEARLSTGEKTKKMATTSRPSSPLPPEEETAAETTTSEEEEQQQMERFYALVANVRALRAMFKEAALPSCREDDVSGGGGGEQRQKRPRAAPWRPAFEMAVFECGGGGGTTTDDIEAATTKGQDGNCKKGKRSEANAAAEEDKGEVIEGKPVAIAIVADGPGKSTTMPDSN.

Basic and acidic residues predominate over residues 1–12 (MEARLSTGEKTK). Disordered regions lie at residues 1–45 (MEAR…QQQM), 65–94 (AALP…APWR), and 119–143 (TTKG…EEDK). Over residues 26-43 (PEEETAAETTTSEEEEQQ) the composition is skewed to acidic residues.

Belongs to the NPR1-interactor family. Interacts with NPR1/NH1. Interacts with NPR3/NH3.

The protein localises to the nucleus. Functionally, binds to and weakly represses NPR1/NH1-mediated transcriptional activation of LG2 in vitro. This chain is NRR repressor homolog 2, found in Oryza sativa subsp. japonica (Rice).